The sequence spans 1127 residues: Zinc finger protein basonuclin-2 (1127 aa).

Residues 44–67 (SEEAEVDVRERDTQRDREPKRARD) form a disordered region. A compositionally biased stretch (basic and acidic residues) spans 49–67 (VDVRERDTQRDREPKRARD). A Glycyl lysine isopeptide (Lys-Gly) (interchain with G-Cter in SUMO2) cross-link involves residue K305. Positions 386–450 (STQNEYNESS…DLSKTEHPKS (65 aa)) are disordered. Residues 389–400 (NEYNESSESEVS) show a composition bias toward low complexity. Residues 403–422 (PYKSDQTPNRNALTSITNVE) are compositionally biased toward polar residues. Residues K424, K444, and K449 each participate in a glycyl lysine isopeptide (Lys-Gly) (interchain with G-Cter in SUMO2) cross-link. Residues 469-492 (VFCNACGKTFYDKGTLKIHYNAVH) form a C2H2-type 1 zinc finger. S589 is subject to Phosphoserine. A Glycyl lysine isopeptide (Lys-Gly) (interchain with G-Cter in SUMO2) cross-link involves residue K669. Residues 675–772 (IDTADEFDDE…EESMEGDEHL (98 aa)) form a disordered region. Residues 676–689 (DTADEFDDEDDDPN) are compositionally biased toward acidic residues. Basic and acidic residues-rich tracts occupy residues 698–708 (MSHDNHCHSQD) and 747–772 (ERDY…DEHL). Residues 861–884 (KICYVCKKSFKSSYSVKLHYRNVH) form a C2H2-type 2 zinc finger. Residues K922 and K947 each participate in a glycyl lysine isopeptide (Lys-Gly) (interchain with G-Cter in SUMO2) cross-link. Disordered stretches follow at residues 955–976 (LGLD…HLNG) and 996–1041 (LQSS…TLPG). Residues 1010-1023 (AGSDEGILLDDIDG) are compositionally biased toward acidic residues. C2H2-type zinc fingers lie at residues 1063–1086 (IMCN…KTVH) and 1091–1118 (HKCK…PNLH). Positions 1107–1127 (SRNRHSQNPNLHKNIPFTSID) are disordered.

In terms of tissue distribution, highly expressed in ovary, testis and kidney. Expressed at moderate levels in skin and small intestine, and at lower levels in lung. Trace amounts of expression detected in liver and colon. Not detected in brain, spleen or thymus.

Its subcellular location is the nucleus. In terms of biological role, probable transcription factor specific for skin keratinocytes. May play a role in the differentiation of spermatozoa and oocytes. May also play an important role in early urinary-tract development. This Mus musculus (Mouse) protein is Zinc finger protein basonuclin-2.